Here is a 431-residue protein sequence, read N- to C-terminus: Cytochrome c oxidase subunit 3 (431 aa).

Transmembrane regions (helical) follow at residues 70 to 90 (IAPLAVTLPLAFFVLNYFGVI), 96 to 116 (FVIALSSFIGGLTIWAISIVF), 132 to 152 (LVMGMMMFIISEIMFFFSFFW), 176 to 196 (VYSYMGLPLLNTVLLLLSGAI), 321 to 341 (LYFTLVCAVVFLFCQGYEYYF), 356 to 376 (FLLTGFHGFHVLVGSILIGII), and 408 to 428 (LFYWHFVDIVWIFLYIVIYWW).

It belongs to the cytochrome c oxidase subunit 3 family. Component of the cytochrome c oxidase (complex IV, CIV), a multisubunit enzyme composed of a catalytic core of 3 subunits and several supernumerary subunits. The complex exists as a monomer or a dimer and forms supercomplexes (SCs) in the inner mitochondrial membrane with ubiquinol-cytochrome c oxidoreductase (cytochrome b-c1 complex, complex III, CIII).

The protein localises to the mitochondrion inner membrane. The enzyme catalyses 4 Fe(II)-[cytochrome c] + O2 + 8 H(+)(in) = 4 Fe(III)-[cytochrome c] + 2 H2O + 4 H(+)(out). Component of the cytochrome c oxidase, the last enzyme in the mitochondrial electron transport chain which drives oxidative phosphorylation. The respiratory chain contains 3 multisubunit complexes succinate dehydrogenase (complex II, CII), ubiquinol-cytochrome c oxidoreductase (cytochrome b-c1 complex, complex III, CIII) and cytochrome c oxidase (complex IV, CIV), that cooperate to transfer electrons derived from NADH and succinate to molecular oxygen, creating an electrochemical gradient over the inner membrane that drives transmembrane transport and the ATP synthase. Cytochrome c oxidase is the component of the respiratory chain that catalyzes the reduction of oxygen to water. Electrons originating from reduced cytochrome c in the intermembrane space (IMS) are transferred via the dinuclear copper A center (CU(A)) of subunit 2 and heme A of subunit 1 to the active site in subunit 1, a binuclear center (BNC) formed by heme A3 and copper B (CU(B)). The BNC reduces molecular oxygen to 2 water molecules using 4 electrons from cytochrome c in the IMS and 4 protons from the mitochondrial matrix. This Dictyostelium citrinum (Slime mold) protein is Cytochrome c oxidase subunit 3 (cox3).